The sequence spans 482 residues: Catalase (482 aa).

Polar residues predominate over residues 1 to 11 (MNAMTNKTLTT). Positions 1–21 (MNAMTNKTLTTAAGAPVADNN) are disordered. Residues histidine 57 and asparagine 130 contribute to the active site. Tyrosine 340 is a binding site for heme.

Belongs to the catalase family. In terms of assembly, homodimer. It depends on heme as a cofactor.

It carries out the reaction 2 H2O2 = O2 + 2 H2O. Functionally, decomposes hydrogen peroxide into water and oxygen; serves to protect cells from the toxic effects of hydrogen peroxide. In Bordetella bronchiseptica (strain ATCC BAA-588 / NCTC 13252 / RB50) (Alcaligenes bronchisepticus), this protein is Catalase (katA).